A 984-amino-acid polypeptide reads, in one-letter code: Putative formate dehydrogenase SA2102 (984 aa).

The region spanning 3-79 (EHLVVTLDGK…PMTVNTVNND (77 aa)) is the 2Fe-2S ferredoxin-type domain. 4 residues coordinate [2Fe-2S] cluster: Cys-37, Cys-48, Cys-51, and Cys-63. In terms of domain architecture, 4Fe-4S His(Cys)3-ligated-type spans 79-119 (DVKDAQKEALDRILEKHMLYCTVCDYNNGDCEIHNTMDAWG). [4Fe-4S] cluster contacts are provided by His-95, Cys-99, Cys-102, Cys-109, Cys-147, Cys-150, Cys-153, Cys-157, Cys-190, Cys-193, Cys-196, Cys-200, Cys-264, Cys-267, Cys-271, and Cys-299. 4Fe-4S ferredoxin-type domains are found at residues 138-165 (PFYRYDPNQCILCGRCVEACQDIEVNET) and 181-211 (NDVPINESSCVSCGQCATVCPCNAMMEVNME). The interval 252–984 (MRKERIKKTK…YVFPGNQVDK (733 aa)) is formate dehydrogenase. In terms of domain architecture, 4Fe-4S Mo/W bis-MGD-type spans 257 to 313 (IKKTKTVCTYCGVGCSFEVWTKDREILKVQPSHDSPANKIATCVKGKFSWGHINSDQ).

This sequence in the C-terminal section; belongs to the prokaryotic molybdopterin-containing oxidoreductase family. It depends on [2Fe-2S] cluster as a cofactor. Requires [4Fe-4S] cluster as cofactor. Mo-bis(molybdopterin guanine dinucleotide) is required as a cofactor.

The enzyme catalyses formate + NAD(+) = CO2 + NADH. The protein is Putative formate dehydrogenase SA2102 of Staphylococcus aureus (strain N315).